A 331-amino-acid chain; its full sequence is GATA transcription factor 12 (331 aa).

Disordered regions lie at residues 30–49 and 105–138; these read ENDV…SSNF and SGFK…SVPA. Residues 34–47 are compositionally biased toward low complexity; it reads VADSTTTTTITDSS. Over residues 116-134 the composition is skewed to polar residues; sequence DTGSPENPNSSSPIFTTDV. The short motif at 139–146 is the Nuclear localization signal element; it reads KARSKRSR. The segment at 174 to 218 is disordered; that stretch reads SSQQHLSPPTSPPLLMAPLGKKQAVDGGHRRKKDVSSPESGGAEE. The GATA-type zinc finger occupies 215 to 269; sequence GAEERRCLHCATDKTPQWRTGPMGPKTLCNACGVRYKSGRLVPEYRPAASPTFVL.

It belongs to the type IV zinc-finger family. Class A subfamily. In terms of tissue distribution, expressed in the vascular cylinder of roots. Expressed in the differentiation zone of the root stele.

The protein localises to the nucleus. Its function is as follows. Transcriptional activator that specifically binds 5'-GATA-3' or 5'-GAT-3' motifs within gene promoters. May be involved in the regulation of some light-responsive genes. Transcription activator involved in xylem formation. Functions upstream of NAC030/VND7, a master switch of xylem vessel differentiation. The chain is GATA transcription factor 12 from Arabidopsis thaliana (Mouse-ear cress).